The primary structure comprises 329 residues: Malate dehydrogenase (329 aa).

Residue 12 to 18 participates in NAD(+) binding; the sequence is GAAGQIG. The substrate site is built by Arg95 and Arg101. Residues Asn108, Gln115, and 132–134 each bind NAD(+); that span reads VGN. 2 residues coordinate substrate: Asn134 and Arg165. Residue His190 is the Proton acceptor of the active site.

It belongs to the LDH/MDH superfamily. MDH type 2 family.

It catalyses the reaction (S)-malate + NAD(+) = oxaloacetate + NADH + H(+). Catalyzes the reversible oxidation of malate to oxaloacetate. This is Malate dehydrogenase from Polynucleobacter necessarius subsp. necessarius (strain STIR1).